We begin with the raw amino-acid sequence, 141 residues long: NADPH-dependent 7-cyano-7-deazaguanine reductase (141 aa).

Cys-34 (thioimide intermediate) is an active-site residue. Asp-41 acts as the Proton donor in catalysis. Residues 56-58 (VEL) and 75-76 (HE) contribute to the substrate site.

Belongs to the GTP cyclohydrolase I family. QueF type 1 subfamily.

It localises to the cytoplasm. The enzyme catalyses 7-aminomethyl-7-carbaguanine + 2 NADP(+) = 7-cyano-7-deazaguanine + 2 NADPH + 3 H(+). It participates in tRNA modification; tRNA-queuosine biosynthesis. Functionally, catalyzes the NADPH-dependent reduction of 7-cyano-7-deazaguanine (preQ0) to 7-aminomethyl-7-deazaguanine (preQ1). This chain is NADPH-dependent 7-cyano-7-deazaguanine reductase, found in Acidithiobacillus ferrooxidans (strain ATCC 23270 / DSM 14882 / CIP 104768 / NCIMB 8455) (Ferrobacillus ferrooxidans (strain ATCC 23270)).